A 167-amino-acid polypeptide reads, in one-letter code: Protein-export protein SecB (167 aa).

Belongs to the SecB family. Homotetramer, a dimer of dimers. One homotetramer interacts with 1 SecA dimer.

The protein resides in the cytoplasm. Functionally, one of the proteins required for the normal export of preproteins out of the cell cytoplasm. It is a molecular chaperone that binds to a subset of precursor proteins, maintaining them in a translocation-competent state. It also specifically binds to its receptor SecA. In Wolbachia pipientis subsp. Culex pipiens (strain wPip), this protein is Protein-export protein SecB.